A 284-amino-acid polypeptide reads, in one-letter code: Protease HtpX (284 aa).

The next 2 membrane-spanning stretches (helical) occupy residues 4–24 (ILLF…ILSL) and 33–53 (MGLL…SLLM). Histidine 139 contacts Zn(2+). The active site involves glutamate 140. Histidine 143 provides a ligand contact to Zn(2+). A run of 2 helical transmembrane segments spans residues 147 to 167 (GDMV…IFAA) and 187 to 207 (IYFL…SMIA). Position 215 (glutamate 215) interacts with Zn(2+).

It belongs to the peptidase M48B family. The cofactor is Zn(2+).

The protein localises to the cell inner membrane. The polypeptide is Protease HtpX (Mannheimia succiniciproducens (strain KCTC 0769BP / MBEL55E)).